The following is a 200-amino-acid chain: NAD(P)H dehydrogenase (quinone) (200 aa).

One can recognise a Flavodoxin-like domain in the interval 4–190; it reads VLVLYYSTYG…EGARFQGRHV (187 aa). FMN is bound by residues 10–15 and 78–80; these read STYGHV and TRY. Y12 is a binding site for NAD(+). A substrate-binding site is contributed by W98. Residues 113–119 and H134 each bind FMN; that span reads STASQHG.

This sequence belongs to the WrbA family. It depends on FMN as a cofactor.

It catalyses the reaction a quinone + NADH + H(+) = a quinol + NAD(+). The enzyme catalyses a quinone + NADPH + H(+) = a quinol + NADP(+). The sequence is that of NAD(P)H dehydrogenase (quinone) from Methylobacterium radiotolerans (strain ATCC 27329 / DSM 1819 / JCM 2831 / NBRC 15690 / NCIMB 10815 / 0-1).